The sequence spans 97 residues: MIRHLVLFKLNDGVGRDEPRVLAGVEAFRALGGQIEDLRFWECAWNISDRPIAYDFAINSAVDDADALKRYLEHPAHQAGVALWREFATWVIADYEF.

In terms of domain architecture, Stress-response A/B barrel spans 2–95 (IRHLVLFKLN…EFATWVIADY (94 aa)).

This is an uncharacterized protein from Streptomyces coelicolor (strain ATCC BAA-471 / A3(2) / M145).